Consider the following 382-residue polypeptide: Methylthioribose-1-phosphate isomerase (382 aa).

Asp-257 serves as the catalytic Proton donor.

Belongs to the eIF-2B alpha/beta/delta subunits family. MtnA subfamily.

It localises to the cytoplasm. Its subcellular location is the nucleus. It catalyses the reaction 5-(methylsulfanyl)-alpha-D-ribose 1-phosphate = 5-(methylsulfanyl)-D-ribulose 1-phosphate. It functions in the pathway amino-acid biosynthesis; L-methionine biosynthesis via salvage pathway; L-methionine from S-methyl-5-thio-alpha-D-ribose 1-phosphate: step 1/6. Its function is as follows. Catalyzes the interconversion of methylthioribose-1-phosphate (MTR-1-P) into methylthioribulose-1-phosphate (MTRu-1-P). This Paracoccidioides brasiliensis (strain Pb18) protein is Methylthioribose-1-phosphate isomerase.